The following is a 467-amino-acid chain: Siroheme synthase (467 aa).

The tract at residues 1 to 203 (METLPIFMKL…GQEEAARHAM (203 aa)) is precorrin-2 dehydrogenase /sirohydrochlorin ferrochelatase. Residues 22 to 23 (EI) and 43 to 44 (PE) each bind NAD(+). S128 carries the phosphoserine modification. The tract at residues 216–467 (GEVYLVGGGP…APSPEVVSAG (252 aa)) is uroporphyrinogen-III C-methyltransferase. P225 serves as a coordination point for S-adenosyl-L-methionine. Catalysis depends on D248, which acts as the Proton acceptor. K270 serves as the catalytic Proton donor. Residues 301 to 303 (GGD), I306, 331 to 332 (TA), M383, and G412 each bind S-adenosyl-L-methionine.

In the N-terminal section; belongs to the precorrin-2 dehydrogenase / sirohydrochlorin ferrochelatase family. The protein in the C-terminal section; belongs to the precorrin methyltransferase family.

It carries out the reaction uroporphyrinogen III + 2 S-adenosyl-L-methionine = precorrin-2 + 2 S-adenosyl-L-homocysteine + H(+). The catalysed reaction is precorrin-2 + NAD(+) = sirohydrochlorin + NADH + 2 H(+). It catalyses the reaction siroheme + 2 H(+) = sirohydrochlorin + Fe(2+). It functions in the pathway cofactor biosynthesis; adenosylcobalamin biosynthesis; precorrin-2 from uroporphyrinogen III: step 1/1. The protein operates within cofactor biosynthesis; adenosylcobalamin biosynthesis; sirohydrochlorin from precorrin-2: step 1/1. It participates in porphyrin-containing compound metabolism; siroheme biosynthesis; precorrin-2 from uroporphyrinogen III: step 1/1. Its pathway is porphyrin-containing compound metabolism; siroheme biosynthesis; siroheme from sirohydrochlorin: step 1/1. It functions in the pathway porphyrin-containing compound metabolism; siroheme biosynthesis; sirohydrochlorin from precorrin-2: step 1/1. Its function is as follows. Multifunctional enzyme that catalyzes the SAM-dependent methylations of uroporphyrinogen III at position C-2 and C-7 to form precorrin-2 via precorrin-1. Then it catalyzes the NAD-dependent ring dehydrogenation of precorrin-2 to yield sirohydrochlorin. Finally, it catalyzes the ferrochelation of sirohydrochlorin to yield siroheme. The chain is Siroheme synthase from Methylobacillus flagellatus (strain ATCC 51484 / DSM 6875 / VKM B-1610 / KT).